A 388-amino-acid polypeptide reads, in one-letter code: Succinate--CoA ligase [ADP-forming] subunit beta (388 aa).

The region spanning 9–244 (KQLFARYGLP…QSQEDPREAQ (236 aa)) is the ATP-grasp domain. ATP contacts are provided by residues lysine 46, 53–55 (GRG), glutamate 99, threonine 102, and glutamate 107. Positions 199 and 213 each coordinate Mg(2+). Residues asparagine 264 and 321 to 323 (GIV) each bind substrate.

This sequence belongs to the succinate/malate CoA ligase beta subunit family. As to quaternary structure, heterotetramer of two alpha and two beta subunits. Mg(2+) is required as a cofactor.

The enzyme catalyses succinate + ATP + CoA = succinyl-CoA + ADP + phosphate. It catalyses the reaction GTP + succinate + CoA = succinyl-CoA + GDP + phosphate. Its pathway is carbohydrate metabolism; tricarboxylic acid cycle; succinate from succinyl-CoA (ligase route): step 1/1. Succinyl-CoA synthetase functions in the citric acid cycle (TCA), coupling the hydrolysis of succinyl-CoA to the synthesis of either ATP or GTP and thus represents the only step of substrate-level phosphorylation in the TCA. The beta subunit provides nucleotide specificity of the enzyme and binds the substrate succinate, while the binding sites for coenzyme A and phosphate are found in the alpha subunit. This chain is Succinate--CoA ligase [ADP-forming] subunit beta, found in Klebsiella pneumoniae (strain 342).